Reading from the N-terminus, the 277-residue chain is Tryptophan synthase alpha chain (277 aa).

Residues glutamate 51 and glutamate 62 each act as proton acceptor in the active site.

This sequence belongs to the TrpA family. Tetramer of two alpha and two beta chains.

It carries out the reaction (1S,2R)-1-C-(indol-3-yl)glycerol 3-phosphate + L-serine = D-glyceraldehyde 3-phosphate + L-tryptophan + H2O. It participates in amino-acid biosynthesis; L-tryptophan biosynthesis; L-tryptophan from chorismate: step 5/5. Functionally, the alpha subunit is responsible for the aldol cleavage of indoleglycerol phosphate to indole and glyceraldehyde 3-phosphate. The sequence is that of Tryptophan synthase alpha chain from Phenylobacterium zucineum (strain HLK1).